We begin with the raw amino-acid sequence, 995 residues long: Aconitate hydratase 2, mitochondrial (995 aa).

A mitochondrion-targeting transit peptide spans 1–83 (MYRRATSGVR…PASLRAQARN (83 aa)). Residues Gln187 and 306 to 308 (DSH) contribute to the substrate site. [4Fe-4S] cluster contacts are provided by Cys538, Cys604, and Cys607. Residues Arg637, Arg642, Arg800, and 881 to 882 (SR) each bind substrate.

It belongs to the aconitase/IPM isomerase family. As to quaternary structure, monomer. [4Fe-4S] cluster serves as cofactor. Mostly expressed in roots, leaves and flowers, also present in stems, and, at low levels, in seeds.

Its subcellular location is the mitochondrion. The enzyme catalyses citrate = D-threo-isocitrate. The protein operates within carbohydrate metabolism; tricarboxylic acid cycle; isocitrate from oxaloacetate: step 2/2. Functionally, catalyzes the isomerization of citrate to isocitrate via cis-aconitate. Contributes to oxidative stress tolerance. Involved in acetate assimilation. This Arabidopsis thaliana (Mouse-ear cress) protein is Aconitate hydratase 2, mitochondrial.